Here is a 326-residue protein sequence, read N- to C-terminus: Alkanal monooxygenase beta chain (326 aa).

Belongs to the bacterial luciferase oxidoreductase family. As to quaternary structure, heterodimer of an alpha and a beta chain.

It catalyses the reaction a long-chain fatty aldehyde + FMNH2 + O2 = a long-chain fatty acid + hnu + FMN + H2O + 2 H(+). Light-emitting reaction in luminous bacteria. The specific role of the beta subunit is unknown, but it is absolutely required for bioluminescence activity. The polypeptide is Alkanal monooxygenase beta chain (luxB) (Photobacterium leiognathi).